The sequence spans 130 residues: Small ribosomal subunit protein uS8 (130 aa).

This sequence belongs to the universal ribosomal protein uS8 family.

The protein is Small ribosomal subunit protein uS8 (RPS15A) of Strongylocentrotus purpuratus (Purple sea urchin).